Here is a 628-residue protein sequence, read N- to C-terminus: Somatic embryogenesis receptor kinase 2 (628 aa).

An N-terminal signal peptide occupies residues 1 to 29 (MGRKKFEAFGFVCLISLLLLFNSLWLASS). Over 30 to 241 (NMEGDALHSL…PTPGGYSATG (212 aa)) the chain is Extracellular. Residues 45–85 (DPNNVLQSWDPTLVNPCTWFHVTCNNENSVIRVDLGNADLS) form a PSKR1 binding region. Residues 56–58 (TLV) are CLE44 binding. Cys61 and Cys68 form a disulfide bridge. Leucine-rich repeat receptor-like protein kinase binding regions lie at residues 62 to 81 (TWFHVTCNNENSVIRVDLGN) and 100 to 105 (YLELYS). 64–65 (FH) lines the brassinolide pocket. LRR repeat units follow at residues 95 to 119 (LKNLQYLELYSNNITGPVPSDLGNL), 121 to 143 (NLVSLDLYLNSFTGPIPDSLGKL), 144 to 167 (FKLRFLRLNNNSLTGPIPMSLTNI), and 168 to 192 (MTLQVLDLSNNRLSGSVPDNGSFSL). 2 N-linked (GlcNAc...) asparagine glycosylation sites follow: Asn107 and Asn118. 2 leucine-rich repeat receptor-like protein kinase binding regions span residues 126–129 (DLYL) and 148–150 (FLR). Residues Asn153 and Asn187 are each glycosylated (N-linked (GlcNAc...) asparagine). The interval 174–197 (DLSNNRLSGSVPDNGSFSLFTPIS) is leucine-rich repeat receptor-like protein kinase binding. Cys205 and Cys213 are joined by a disulfide. The helical transmembrane segment at 242–262 (AIAGGVAAGAALLFAAPALAF) threads the bilayer. Topologically, residues 263 to 628 (AWWRRRKPQE…LHAMELSGPR (366 aa)) are cytoplasmic. Position 302 is a phosphothreonine (Thr302). Positions 305-592 (FSNKNILGRG…GLAEKWDEWQ (288 aa)) constitute a Protein kinase domain. Position 311-319 (311-319 (LGRGGFGKV)) interacts with ATP. The residue at position 328 (Thr328) is a Phosphothreonine. Lys333 lines the ATP pocket. Phosphoserine occurs at positions 386 and 389. The active-site Proton acceptor is Asp432. Residues Thr462, Thr465, Thr466, and Thr471 each carry the phosphothreonine modification. Tyr479 is modified (phosphotyrosine). A Phosphoserine modification is found at Ser481. Thr482 carries the post-translational modification Phosphothreonine. Ser486 is subject to Phosphoserine. A Phosphothreonine modification is found at Thr562. Ser604 is modified (phosphoserine). A Phosphothreonine modification is found at Thr616. Ser625 bears the Phosphoserine mark.

Belongs to the protein kinase superfamily. Ser/Thr protein kinase family. Homo- and heterodimer. Component of the SERK1 signaling complex, composed of KAPP, CDC48A, GRF6 or GRF7, SERK1, SERK2, SERK3/BAK1 and BRI1. Bind to BRI1 in a brassinolide-dependent manner. Heterodimer with PSKR1. Interacts with the EF-Tu receptor EFR and FLS2 in a specific ligand-induced manner. Interacts with ERECTA in a EPF2-induced manner. Interacts with ERL1 in a EPF1-induced manner. Interacts with TMM. In the presence of the signal peptide RGF1, interacts with RGI3/RGFR1 and RGI4/RGFR2/SKM2. Binds to the peptide CLE44 in the presence of TDR. In terms of processing, autophosphorylated. In terms of tissue distribution, expressed in flowers, tapetum, developing microspores, all cells of the embryo sac, provascular strands and developing vascular bundles. Low expression in adult vascular tissue.

It localises to the cell membrane. It carries out the reaction L-seryl-[protein] + ATP = O-phospho-L-seryl-[protein] + ADP + H(+). The enzyme catalyses L-threonyl-[protein] + ATP = O-phospho-L-threonyl-[protein] + ADP + H(+). In terms of biological role, serine/threonine-kinase involved in brassinosteroid-dependent and -independent signaling pathways. Acts redundantly with SERK1 as a control point for sporophytic development controlling male gametophyte production. Serves as coreceptor to small peptide (e.g. RGF1 and CLE44) signaling. Involved in the perception of phytosulfokine and subsequent signal transduction. This is Somatic embryogenesis receptor kinase 2 from Arabidopsis thaliana (Mouse-ear cress).